Reading from the N-terminus, the 431-residue chain is Lipoyl synthase 2, mitochondrial (431 aa).

A disordered region spans residues 21–43 (SPLGKLQEERGEGVAKDPKKDKQ). Positions 26 to 40 (LQEERGEGVAKDPKK) are enriched in basic and acidic residues. Cysteine 127, cysteine 132, cysteine 138, cysteine 159, cysteine 163, cysteine 166, and serine 375 together coordinate [4Fe-4S] cluster. One can recognise a Radical SAM core domain in the interval 142–364 (DEEEGTATAT…EEEAMAMGFL (223 aa)).

This sequence belongs to the radical SAM superfamily. Lipoyl synthase family. [4Fe-4S] cluster is required as a cofactor.

It is found in the mitochondrion. It catalyses the reaction [[Fe-S] cluster scaffold protein carrying a second [4Fe-4S](2+) cluster] + N(6)-octanoyl-L-lysyl-[protein] + 2 oxidized [2Fe-2S]-[ferredoxin] + 2 S-adenosyl-L-methionine + 4 H(+) = [[Fe-S] cluster scaffold protein] + N(6)-[(R)-dihydrolipoyl]-L-lysyl-[protein] + 4 Fe(3+) + 2 hydrogen sulfide + 2 5'-deoxyadenosine + 2 L-methionine + 2 reduced [2Fe-2S]-[ferredoxin]. The protein operates within protein modification; protein lipoylation via endogenous pathway; protein N(6)-(lipoyl)lysine from octanoyl-[acyl-carrier-protein]: step 2/2. Functionally, catalyzes the radical-mediated insertion of two sulfur atoms into the C-6 and C-8 positions of the octanoyl moiety bound to the lipoyl domains of lipoate-dependent enzymes, thereby converting the octanoylated domains into lipoylated derivatives. The sequence is that of Lipoyl synthase 2, mitochondrial from Trypanosoma cruzi (strain CL Brener).